Consider the following 191-residue polypeptide: Orotate phosphoribosyltransferase (191 aa).

5-phospho-alpha-D-ribose 1-diphosphate is bound at residue 116-124; sequence EDVVTTGGS. Orotate contacts are provided by threonine 120 and arginine 148.

Belongs to the purine/pyrimidine phosphoribosyltransferase family. PyrE subfamily. Homodimer. Requires Mg(2+) as cofactor.

The enzyme catalyses orotidine 5'-phosphate + diphosphate = orotate + 5-phospho-alpha-D-ribose 1-diphosphate. Its pathway is pyrimidine metabolism; UMP biosynthesis via de novo pathway; UMP from orotate: step 1/2. In terms of biological role, catalyzes the transfer of a ribosyl phosphate group from 5-phosphoribose 1-diphosphate to orotate, leading to the formation of orotidine monophosphate (OMP). In Carboxydothermus hydrogenoformans (strain ATCC BAA-161 / DSM 6008 / Z-2901), this protein is Orotate phosphoribosyltransferase.